Here is a 335-residue protein sequence, read N- to C-terminus: MIIAVDGMGGDFAPELVVEGCIQAVKEYEGIHIIITGKKELIKNELDKREYNGNKIEILNSEEVISTNEAPVKAIRRKKDSSMVKALELVKEGKAQAVISAGSTGALMAGATFVLGRIKGINRVCLAPLLPGAKAPFMIADAGANVDCKAEYLVQFAMMGKVYFESVLGVKSPTVGLVNIGAEEEKGNELTKAAYKLLKDTDFNFIGNIEPRDIPRGEVNIAVCDGFIGNTVLKTYEGVASNLFSMLKKEIMASTRGKIGGALLKPVFKDFKKKFDYTEYGGSPFLGAKGICIKAHGSSDAKAFKNAIRQAKICYDKKIIEEIENNLGNLIENNI.

This sequence belongs to the PlsX family. In terms of assembly, homodimer. Probably interacts with PlsY.

It localises to the cytoplasm. The enzyme catalyses a fatty acyl-[ACP] + phosphate = an acyl phosphate + holo-[ACP]. Its pathway is lipid metabolism; phospholipid metabolism. In terms of biological role, catalyzes the reversible formation of acyl-phosphate (acyl-PO(4)) from acyl-[acyl-carrier-protein] (acyl-ACP). This enzyme utilizes acyl-ACP as fatty acyl donor, but not acyl-CoA. The polypeptide is Phosphate acyltransferase (Clostridium botulinum (strain Langeland / NCTC 10281 / Type F)).